A 330-amino-acid polypeptide reads, in one-letter code: Electron transfer flavoprotein subunit alpha (330 aa).

Position 270–298 (270–298) interacts with FAD; the sequence is LYIACGISGAIQHLAGMSNSGTIVAINKN.

It belongs to the ETF alpha-subunit/FixB family. In terms of assembly, heterodimer of an alpha and a beta subunit. Requires FAD as cofactor.

Its function is as follows. The electron transfer flavoprotein serves as a specific electron acceptor for other dehydrogenases. It transfers the electrons to the main respiratory chain via ETF-ubiquinone oxidoreductase (ETF dehydrogenase). The polypeptide is Electron transfer flavoprotein subunit alpha (etfA) (Thermoanaerobacterium thermosaccharolyticum (strain ATCC 7956 / DSM 571 / NCIMB 9385 / NCA 3814 / NCTC 13789 / WDCM 00135 / 2032) (Clostridium thermosaccharolyticum)).